A 365-amino-acid chain; its full sequence is MEVKEALFMNRGEGENSYAQNSSFTQKVASMTMPVLENAVETLFSKDFHLLQALNVVDLGCATSPNTFTVISTIKRMMEKKCRELNCQTLELQVYLNDLPGNDFNTLFKGLLSKVVVGNKCEEVSCYVMGVPGSFHGRLFPRNSLRLVHSCYSAHWLSQAPKGLTSREGLALNRRKIYISKTSPLVVREAYLSQFHEDFTMFLNARSQEVVPNGCMVLILPGRQSSNPSSMESCFTWELLAIAIGELVSQGLIDEDKLDTFNVPSYFPSLEEVKDIVERDGSFTIDHMVGFELDTPQMQENDKWVRVEKLAKAVRAFTEPIISNQFGHEIMDKLYDKFTYIVVSDLEGKIPKTTSIVLVLSKIIG.

Residue Tyr18 coordinates S-adenosyl-L-homocysteine. Thr25 provides a ligand contact to caffeine. S-adenosyl-L-homocysteine is bound by residues Cys61, Asn66, Asp98, Leu99, Ser134, and Phe135. Caffeine-binding residues include Tyr152, His155, and Trp156. 4 residues coordinate Mg(2+): Asn173, Asp259, Phe261, and Asn262. Residue Phe317 coordinates caffeine.

It belongs to the methyltransferase superfamily. Type-7 methyltransferase family. The cofactor is Mg(2+).

It participates in alkaloid biosynthesis. In terms of biological role, may be involved in the biosynthesis of caffeine. The polypeptide is Probable caffeine synthase 5 (Camellia sinensis (Tea plant)).